The chain runs to 187 residues: GTP cyclohydrolase 1 (187 aa).

Residues Cys-79, His-82, and Cys-150 each coordinate Zn(2+).

The protein belongs to the GTP cyclohydrolase I family. Toroid-shaped homodecamer, composed of two pentamers of five dimers.

It carries out the reaction GTP + H2O = 7,8-dihydroneopterin 3'-triphosphate + formate + H(+). The protein operates within cofactor biosynthesis; 7,8-dihydroneopterin triphosphate biosynthesis; 7,8-dihydroneopterin triphosphate from GTP: step 1/1. This Fusobacterium nucleatum subsp. nucleatum (strain ATCC 25586 / DSM 15643 / BCRC 10681 / CIP 101130 / JCM 8532 / KCTC 2640 / LMG 13131 / VPI 4355) protein is GTP cyclohydrolase 1.